Reading from the N-terminus, the 333-residue chain is Glycerol-3-phosphate dehydrogenase [NAD(P)+] (333 aa).

NADPH-binding residues include Ser10, Trp11, and Lys105. Residues Lys105, Gly136, and Thr138 each contribute to the sn-glycerol 3-phosphate site. Ala140 is a binding site for NADPH. Positions 191, 244, 254, 255, and 256 each coordinate sn-glycerol 3-phosphate. The active-site Proton acceptor is the Lys191. Arg255 serves as a coordination point for NADPH. The NADPH site is built by Val279 and Glu281.

The protein belongs to the NAD-dependent glycerol-3-phosphate dehydrogenase family.

The protein localises to the cytoplasm. The enzyme catalyses sn-glycerol 3-phosphate + NAD(+) = dihydroxyacetone phosphate + NADH + H(+). It catalyses the reaction sn-glycerol 3-phosphate + NADP(+) = dihydroxyacetone phosphate + NADPH + H(+). It participates in membrane lipid metabolism; glycerophospholipid metabolism. Functionally, catalyzes the reduction of the glycolytic intermediate dihydroxyacetone phosphate (DHAP) to sn-glycerol 3-phosphate (G3P), the key precursor for phospholipid synthesis. The protein is Glycerol-3-phosphate dehydrogenase [NAD(P)+] of Trichlorobacter lovleyi (strain ATCC BAA-1151 / DSM 17278 / SZ) (Geobacter lovleyi).